Consider the following 63-residue polypeptide: Prokaryotic ubiquitin-like protein Pup (63 aa).

Residues 1 to 11 (MAQEQTRRGGG) show a composition bias toward basic and acidic residues. The disordered stretch occupies residues 1–36 (MAQEQTRRGGGGDDDEFTSSTSVGQERREKLTEETD). Positions 20–57 (STSVGQERREKLTEETDDLLDEIDDVLEENAEDFVRAY) are ARC ATPase binding. Positions 23-51 (VGQERREKLTEETDDLLDEIDDVLEENAE) form a coiled coil. Gln63 carries the post-translational modification Deamidated glutamine. Gln63 is covalently cross-linked (Isoglutamyl lysine isopeptide (Gln-Lys) (interchain with K-? in acceptor proteins)).

It belongs to the prokaryotic ubiquitin-like protein family. In terms of assembly, strongly interacts with the proteasome-associated ATPase ARC through a hydrophobic interface; the interacting region of Pup lies in its C-terminal half. There is one Pup binding site per ARC hexamer ring. Post-translationally, is modified by deamidation of its C-terminal glutamine to glutamate by the deamidase Dop, a prerequisite to the subsequent pupylation process.

It functions in the pathway protein degradation; proteasomal Pup-dependent pathway. In terms of biological role, protein modifier that is covalently attached to lysine residues of substrate proteins, thereby targeting them for proteasomal degradation. The tagging system is termed pupylation. In Mycobacterium leprae (strain Br4923), this protein is Prokaryotic ubiquitin-like protein Pup.